The following is a 381-amino-acid chain: MFEMYIESGMNKLRCGYTTGSCATGAAKAATMLLFDLINSEEELNEIEIDTPKGIKVEMPIDHVVVGKNFVQCTILKFSGDDKDITMGLEIQATVEKISKEEAEELSKKLISNESKIIVLDGGIGVGRVTKDGLFVAKGEPAINPVPRQMIIKEIESILPKDKYVKVIISVPQGTEIGKKTFNPRLGIEGGISILGTSGIVYPMSEDALKASIKLEIKQKSLKNKNLILTFGNLGENYCKSLGYIEEEIIICSNFIGFALECCVSCKVKSILIVGHIGKMSKIAYGCFNTHSRVCGVRLEVLALELTLLGYDVSLVNKVLNEKTCEGAVKLLGSGYENLYKNIGKKILNSMKTYVYDELKIDAVMYYGASNPILLWSSCLE.

This sequence belongs to the CbiD family.

It carries out the reaction Co-precorrin-5B + S-adenosyl-L-methionine = Co-precorrin-6A + S-adenosyl-L-homocysteine. The protein operates within cofactor biosynthesis; adenosylcobalamin biosynthesis; cob(II)yrinate a,c-diamide from sirohydrochlorin (anaerobic route): step 6/10. Its function is as follows. Catalyzes the methylation of C-1 in cobalt-precorrin-5B to form cobalt-precorrin-6A. The sequence is that of Cobalt-precorrin-5B C(1)-methyltransferase from Clostridium botulinum (strain Eklund 17B / Type B).